The sequence spans 343 residues: Methionine import ATP-binding protein MetN (343 aa).

Positions 2–241 (IKLFHINKIF…PKTPIAQAFI (240 aa)) constitute an ABC transporter domain. Residue 38–45 (GSSGAGKS) coordinates ATP.

The protein belongs to the ABC transporter superfamily. Methionine importer (TC 3.A.1.24) family. In terms of assembly, the complex is composed of two ATP-binding proteins (MetN), two transmembrane proteins (MetI) and a solute-binding protein (MetQ).

Its subcellular location is the cell inner membrane. It carries out the reaction L-methionine(out) + ATP + H2O = L-methionine(in) + ADP + phosphate + H(+). The catalysed reaction is D-methionine(out) + ATP + H2O = D-methionine(in) + ADP + phosphate + H(+). Functionally, part of the ABC transporter complex MetNIQ involved in methionine import. Responsible for energy coupling to the transport system. This is Methionine import ATP-binding protein MetN from Photorhabdus laumondii subsp. laumondii (strain DSM 15139 / CIP 105565 / TT01) (Photorhabdus luminescens subsp. laumondii).